The following is a 130-amino-acid chain: uncharacterized protein (130 aa).

This sequence belongs to the thioester dehydratase family. FabZ subfamily.

This is an uncharacterized protein from Bacillus subtilis (strain 168).